The primary structure comprises 559 residues: 3-phosphoinositide-dependent protein kinase 1 (559 aa).

Residue Tyr9 is modified to Phosphotyrosine; by SRC and INSR. At Ser25 the chain carries Phosphoserine. Positions 25 to 83 (SPSMVRSQTEPSSSPGIPSGVSRQGSTMDGTTAEARPSTNPLQQHPAQLPPQPRKKRPE) are disordered. The span at 35–46 (PSSSPGIPSGVS) shows a compositional bias: low complexity. The 261-residue stretch at 85–345 (FKFGKILGEG…YGPLKAHPFF (261 aa)) folds into the Protein kinase domain. ATP contacts are provided by residues 95 to 97 (SFS) and Lys114. Residues 116-160 (LEKRHIIKENKVPYVTRERDVMSRLDHPFFVKLYFTFQDDEKLYF) are PIF-pocket. Residues 163–165 (SYA) and Glu169 contribute to the ATP site. Asp208 (proton acceptor) is an active-site residue. ATP-binding residues include Glu212 and Asp226. Phosphoserine is present on Ser244. Position 307 is an N6-acetyllysine (Lys307). The residue at position 357 (Thr357) is a Phosphothreonine; by MELK. 2 positions are modified to phosphotyrosine; by SRC and INSR: Tyr376 and Tyr379. At Ser396 the chain carries Phosphoserine. Ser397 carries the phosphoserine; by MAP3K5 modification. Ser399 is subject to Phosphoserine. Position 401 is a phosphoserine; by MAP3K5 (Ser401). Position 413 is a phosphoserine (Ser413). One can recognise a PH domain in the interval 462-553 (KMGPVDKRKG…EVWRQQYQSS (92 aa)). Position 504 is a phosphoserine; by PKC/PRKCQ (Ser504). Thr516 carries the phosphothreonine; by autocatalysis modification. Position 532 is a phosphoserine; by PKC/PRKCQ (Ser532).

Belongs to the protein kinase superfamily. AGC Ser/Thr protein kinase family. PDPK1 subfamily. Homodimer in its autoinhibited state. Active as monomer. Interacts with NPRL2, PPARG, PAK1, PTK2B, GRB14, PKN1 (via C-terminus), STRAP and IKKB. The Tyr-9 phosphorylated form interacts with SRC, RASA1 and CRK (via their SH2 domains). Interacts with SGK3 in a phosphorylation-dependent manner. The tyrosine-phosphorylated form interacts with PTPN6. The Ser-244 phosphorylated form interacts with YWHAH and YWHAQ. Binds INSR in response to insulin. Interacts (via PH domain) with SMAD3, SMAD4 and SMAD7. Interacts with PKN2; the interaction stimulates PDPK1 autophosphorylation, its PI(3,4,5)P3-dependent kinase activity toward 'Ser-473' of AKT1 but also activates its kinase activity toward PRKCD and PRKCZ. Phosphorylation on Ser-244 in the activation loop is required for full activity. PDPK1 itself can autophosphorylate Ser-244, leading to its own activation. Autophosphorylation is inhibited by the apoptotic C-terminus cleavage product of PKN2. Tyr-9 phosphorylation is critical for stabilization of both PDPK1 and the PDPK1/SRC complex via HSP90-mediated protection of PDPK1 degradation. Angiotensin II stimulates the tyrosine phosphorylation of PDPK1 in vascular smooth muscle in a calcium- and SRC-dependent manner. Phosphorylated on Tyr-9, Tyr-376 and Tyr-379 by INSR in response to insulin. Palmitate negatively regulates autophosphorylation at Ser-244 and palmitate-induced phosphorylation at Ser-532 and Ser-504 by PKC/PRKCQ negatively regulates its ability to phosphorylate PKB/AKT1. Phosphorylation at Thr-357 by MELK partially inhibits kinase activity, the inhibition is cooperatively enhanced by phosphorylation at Ser-397 and Ser-401 by MAP3K5. Post-translationally, monoubiquitinated in the kinase domain, deubiquitinated by USP4.

The protein localises to the cytoplasm. The protein resides in the nucleus. Its subcellular location is the cell membrane. It is found in the cell junction. It localises to the focal adhesion. It catalyses the reaction L-seryl-[protein] + ATP = O-phospho-L-seryl-[protein] + ADP + H(+). It carries out the reaction L-threonyl-[protein] + ATP = O-phospho-L-threonyl-[protein] + ADP + H(+). With respect to regulation, homodimerization regulates its activity by maintaining the kinase in an autoinhibitory conformation. NPRL2 down-regulates its activity by interfering with tyrosine phosphorylation at the Tyr-9, Tyr-376 and Tyr-379 residues. The 14-3-3 protein YWHAQ acts as a negative regulator by association with the residues surrounding the Ser-244 residue. STRAP positively regulates its activity by enhancing its autophosphorylation and by stimulating its dissociation from YWHAQ. SMAD2, SMAD3, SMAD4 and SMAD7 also positively regulate its activity by stimulating its dissociation from YWHAQ. Activated by phosphorylation on Tyr-9, Tyr-376 and Tyr-379 by INSR in response to insulin. Serine/threonine kinase which acts as a master kinase, phosphorylating and activating a subgroup of the AGC family of protein kinases. Its targets include: protein kinase B (PKB/AKT1, PKB/AKT2, PKB/AKT3), p70 ribosomal protein S6 kinase (RPS6KB1), p90 ribosomal protein S6 kinase (RPS6KA1, RPS6KA2 and RPS6KA3), cyclic AMP-dependent protein kinase (PRKACA), protein kinase C (PRKCD and PRKCZ), serum and glucocorticoid-inducible kinase (SGK1, SGK2 and SGK3), p21-activated kinase-1 (PAK1), TSSK3, protein kinase PKN (PKN1 and PKN2). Plays a central role in the transduction of signals from insulin by providing the activating phosphorylation to PKB/AKT1, thus propagating the signal to downstream targets controlling cell proliferation and survival, as well as glucose and amino acid uptake and storage. Negatively regulates the TGF-beta-induced signaling by: modulating the association of SMAD3 and SMAD7 with TGF-beta receptor, phosphorylating SMAD2, SMAD3, SMAD4 and SMAD7, preventing the nuclear translocation of SMAD3 and SMAD4 and the translocation of SMAD7 from the nucleus to the cytoplasm in response to TGF-beta. Activates PPARG transcriptional activity and promotes adipocyte differentiation. Activates the NF-kappa-B pathway via phosphorylation of IKKB. The tyrosine phosphorylated form is crucial for the regulation of focal adhesions by angiotensin II. Controls proliferation, survival, and growth of developing pancreatic cells. Participates in the regulation of Ca(2+) entry and Ca(2+)-activated K(+) channels of mast cells. Essential for the motility of vascular endothelial cells (ECs) and is involved in the regulation of their chemotaxis. Plays a critical role in cardiac homeostasis by serving as a dual effector for cell survival and beta-adrenergic response. Plays an important role during thymocyte development by regulating the expression of key nutrient receptors on the surface of pre-T cells and mediating Notch-induced cell growth and proliferative responses. Provides negative feedback inhibition to toll-like receptor-mediated NF-kappa-B activation in macrophages. This chain is 3-phosphoinositide-dependent protein kinase 1 (Pdpk1), found in Rattus norvegicus (Rat).